The following is a 1234-amino-acid chain: Chromosome-associated kinesin KIF4B (1234 aa).

In terms of domain architecture, Kinesin motor spans 9–336 (PVRVALRCRP…LRYADRARKI (328 aa)). An ATP-binding site is contributed by 88-95 (GQTGSGKT). The stretch at 350 to 999 (ELNHLKQQVQ…IKQKLILLQV (650 aa)) forms a coiled coil. Ser394 is subject to Phosphoserine. Disordered stretches follow at residues 494–513 (EEAQ…AFTT) and 712–737 (KRLK…HGKE). A compositionally biased stretch (polar residues) spans 498-513 (VETSPETSRSSDAFTT). The interaction with PRC1 stretch occupies residues 663–1234 (QWKQKKDKEV…GCSPIEEEAH (572 aa)). Residues 713–737 (RLKDALQKQREVTDKRKETQSHGKE) show a composition bias toward basic and acidic residues. The Nuclear localization signal motif lies at 793–798 (PKLRKC). Thr799 carries the post-translational modification Phosphothreonine. Phosphoserine is present on residues Ser801, Ser951, Ser1001, Ser1013, Ser1017, and Ser1028. Residues 1000 to 1234 (ASRQKHLPND…GCSPIEEEAH (235 aa)) form a globular region. Disordered regions lie at residues 1007 to 1030 (PNDT…PSRV), 1052 to 1076 (VNEH…KPTK), 1122 to 1143 (RQQG…GSFK), and 1183 to 1234 (TAPA…EEAH). The segment covering 1056–1071 (EDGDGDGDSDEGDDEE) has biased composition (acidic residues). The segment at 1086 to 1144 (QGCSCKGWCGNKQCGCRKQKSDCGVDCSCDPTKCRNRQQGKDSLGTVEQTQDSEGSFKL) is CRD; required for [4Fe-4S] cluster binding and localization to the spindle midzone and midbody during anaphase and telophase. Ser1128 is subject to Phosphoserine. A Phosphothreonine modification is found at Thr1183. The residue at position 1188 (Ser1188) is a Phosphoserine. Lys1196 participates in a covalent cross-link: Glycyl lysine isopeptide (Lys-Gly) (interchain with G-Cter in SUMO2). Position 1227 is a phosphoserine (Ser1227).

Belongs to the TRAFAC class myosin-kinesin ATPase superfamily. Kinesin family. Chromokinesin subfamily. Requires [2Fe-2S] cluster as cofactor. [4Fe-4S] cluster is required as a cofactor. In terms of tissue distribution, specifically expressed in testis.

The protein localises to the nucleus matrix. Its subcellular location is the cytoplasm. It is found in the cytoskeleton. In terms of biological role, iron-sulfur (Fe-S) cluster binding motor protein that has a role in chromosome segregation during mitosis. Translocates PRC1 to the plus ends of interdigitating spindle microtubules during the metaphase to anaphase transition, an essential step for the formation of an organized central spindle midzone and midbody and for successful cytokinesis. May play a role in mitotic chromosomal positioning and bipolar spindle stabilization. The chain is Chromosome-associated kinesin KIF4B (KIF4B) from Homo sapiens (Human).